The primary structure comprises 114 residues: T cell receptor beta variable 27 (114 aa).

Positions 1–21 are cleaved as a signal peptide; that stretch reads MGPQLLGYVVLCLLGAGPLEA. The Ig-like domain maps to 22–114; sequence QVTQNPRYLI…TSLYFCASSL (93 aa). C42 and C110 are oxidised to a cystine. N103 carries an N-linked (GlcNAc...) asparagine glycan.

Alpha-beta TR is a heterodimer composed of an alpha and beta chain; disulfide-linked. The alpha-beta TR is associated with the transmembrane signaling CD3 coreceptor proteins to form the TR-CD3 (TcR or TCR). The assembly of alpha-beta TR heterodimers with CD3 occurs in the endoplasmic reticulum where a single alpha-beta TR heterodimer associates with one CD3D-CD3E heterodimer, one CD3G-CD3E heterodimer and one CD247 homodimer forming a stable octameric structure. CD3D-CD3E and CD3G-CD3E heterodimers preferentially associate with TR alpha and TR beta chains, respectively. The association of the CD247 homodimer is the last step of TcR assembly in the endoplasmic reticulum and is required for transport to the cell surface.

The protein resides in the cell membrane. V region of the variable domain of T cell receptor (TR) beta chain that participates in the antigen recognition. Alpha-beta T cell receptors are antigen specific receptors which are essential to the immune response and are present on the cell surface of T lymphocytes. Recognize peptide-major histocompatibility (MH) (pMH) complexes that are displayed by antigen presenting cells (APC), a prerequisite for efficient T cell adaptive immunity against pathogens. Binding of alpha-beta TR to pMH complex initiates TR-CD3 clustering on the cell surface and intracellular activation of LCK that phosphorylates the ITAM motifs of CD3G, CD3D, CD3E and CD247 enabling the recruitment of ZAP70. In turn ZAP70 phosphorylates LAT, which recruits numerous signaling molecules to form the LAT signalosome. The LAT signalosome propagates signal branching to three major signaling pathways, the calcium, the mitogen-activated protein kinase (MAPK) kinase and the nuclear factor NF-kappa-B (NF-kB) pathways, leading to the mobilization of transcription factors that are critical for gene expression and essential for T cell growth and differentiation. The T cell repertoire is generated in the thymus, by V-(D)-J rearrangement. This repertoire is then shaped by intrathymic selection events to generate a peripheral T cell pool of self-MH restricted, non-autoaggressive T cells. Post-thymic interaction of alpha-beta TR with the pMH complexes shapes TR structural and functional avidity. The protein is T cell receptor beta variable 27 of Homo sapiens (Human).